We begin with the raw amino-acid sequence, 233 residues long: Small ribosomal subunit protein uS3 (233 aa).

Residues 39-107 enclose the KH type-2 domain; that stretch reads VRQYLTKELA…PAQINIAEVR (69 aa).

This sequence belongs to the universal ribosomal protein uS3 family. In terms of assembly, part of the 30S ribosomal subunit. Forms a tight complex with proteins S10 and S14.

Functionally, binds the lower part of the 30S subunit head. Binds mRNA in the 70S ribosome, positioning it for translation. The sequence is that of Small ribosomal subunit protein uS3 from Citrobacter koseri (strain ATCC BAA-895 / CDC 4225-83 / SGSC4696).